The following is a 120-amino-acid chain: Large ribosomal subunit protein uL18 (120 aa).

The protein belongs to the universal ribosomal protein uL18 family. As to quaternary structure, part of the 50S ribosomal subunit; part of the 5S rRNA/L5/L18/L25 subcomplex. Contacts the 5S and 23S rRNAs.

This is one of the proteins that bind and probably mediate the attachment of the 5S RNA into the large ribosomal subunit, where it forms part of the central protuberance. The polypeptide is Large ribosomal subunit protein uL18 (Finegoldia magna (strain ATCC 29328 / DSM 20472 / WAL 2508) (Peptostreptococcus magnus)).